Here is a 459-residue protein sequence, read N- to C-terminus: Cysteine--tRNA ligase (459 aa).

Zn(2+) is bound at residue C28. The short motif at 30–40 (VTIYDLCHIGH) is the 'HIGH' region element. Residues C209, H234, and E238 each contribute to the Zn(2+) site. The 'KMSKS' region signature appears at 266–270 (KMSKS). Residue K269 coordinates ATP.

Belongs to the class-I aminoacyl-tRNA synthetase family. As to quaternary structure, monomer. Zn(2+) is required as a cofactor.

The protein localises to the cytoplasm. It catalyses the reaction tRNA(Cys) + L-cysteine + ATP = L-cysteinyl-tRNA(Cys) + AMP + diphosphate. The polypeptide is Cysteine--tRNA ligase (Shewanella baltica (strain OS223)).